A 245-amino-acid polypeptide reads, in one-letter code: MIIPALDLIDGTVVRLHQGDYGKQRDYGNNPLPRLQDYAAQGAEVLHLVDLTGAKDPAKRQIPLIKTLVAGVNVPVQVGGGVRSEKDVAALLEAGVARVVVGSTAVKSPEMVKGWFERFGADALVLALDVRIDEQGNKQVAVSGWQENSGVSLEQLVETYLPVGLKHVLCTDISRDGTLAGSNVSLYEEVCARYPQVAFQSSGGIGDINDVAALRGTGVRGVIVGRALLEGKFTVKEAIACWQNA.

Asp7 acts as the Proton acceptor in catalysis. Catalysis depends on Asp129, which acts as the Proton donor.

It belongs to the HisA/HisF family.

The protein localises to the cytoplasm. It carries out the reaction 1-(5-phospho-beta-D-ribosyl)-5-[(5-phospho-beta-D-ribosylamino)methylideneamino]imidazole-4-carboxamide = 5-[(5-phospho-1-deoxy-D-ribulos-1-ylimino)methylamino]-1-(5-phospho-beta-D-ribosyl)imidazole-4-carboxamide. Its pathway is amino-acid biosynthesis; L-histidine biosynthesis; L-histidine from 5-phospho-alpha-D-ribose 1-diphosphate: step 4/9. In Escherichia coli O6:K15:H31 (strain 536 / UPEC), this protein is 1-(5-phosphoribosyl)-5-[(5-phosphoribosylamino)methylideneamino] imidazole-4-carboxamide isomerase.